The following is a 499-amino-acid chain: Putative lipase atg15 (499 aa).

The Cytoplasmic portion of the chain corresponds to 1–9 (MSIGEVSDS). The chain crosses the membrane as a helical; Signal-anchor for type II membrane protein span at residues 10 to 30 (AGHLASLVLPIEVAPIAPLIP). The Lumenal portion of the chain corresponds to 31–499 (EPPATAEHIF…PDSPERNEEM (469 aa)). N-linked (GlcNAc...) asparagine glycosylation is found at Asn170, Asn191, Asn192, Asn250, and Asn274. Ser290 acts as the Charge relay system in catalysis. The N-linked (GlcNAc...) asparagine glycan is linked to Asn436. The tract at residues 436 to 499 (NGTETTTTSS…PDSPERNEEM (64 aa)) is disordered. Low complexity predominate over residues 438-454 (TETTTTSSAPTTTSISR).

It belongs to the AB hydrolase superfamily. Lipase family. In terms of assembly, binds to both phosphatidylinositol (PI) and phosphatidylinositol 3,5-bisphosphate (PIP2).

It localises to the endosome. Its subcellular location is the multivesicular body membrane. The protein resides in the prevacuolar compartment membrane. The enzyme catalyses a triacylglycerol + H2O = a diacylglycerol + a fatty acid + H(+). In terms of biological role, lipase which is essential for lysis of subvacuolar cytoplasm to vacuole targeted bodies and intravacuolar autophagic bodies. Involved in the lysis of intravacuolar multivesicular body (MVB) vesicles. The intravacuolar membrane disintegration by atg15 is critical to life span extension. This chain is Putative lipase atg15 (atg15), found in Chaetomium globosum (strain ATCC 6205 / CBS 148.51 / DSM 1962 / NBRC 6347 / NRRL 1970) (Soil fungus).